A 347-amino-acid chain; its full sequence is Fe(2+) transport protein 1 (347 aa).

Residues 1–22 form the signal peptide; the sequence is MASNSALLMKTIFLVLIFVSFA. The Extracellular portion of the chain corresponds to 23–52; sequence ISPATSTAPEECGSESANPCVNKAKALPLK. The chain crosses the membrane as a helical span at residues 53–73; the sequence is VIAIFVILIASMIGVGAPLFS. Residues 74–84 lie on the Cytoplasmic side of the membrane; it reads RNVSFLQPDGN. A helical membrane pass occupies residues 85–105; that stretch reads IFTIIKCFASGIILGTGFMHV. Residues 106-125 are Extracellular-facing; the sequence is LPDSFEMLSSICLEENPWHK. The chain crosses the membrane as a helical span at residues 126–146; the sequence is FPFSGFLAMLSGLITLAIDSM. Residues 147 to 192 are Cytoplasmic-facing; the sequence is ATSLYTSKNAVGIMPHGHGHGHGPANDVTLPIKEDDSSNAQLLRYR. Residues lysine 154 and lysine 179 each participate in a glycyl lysine isopeptide (Lys-Gly) (interchain with G-Cter in ubiquitin) cross-link. Residues 193–213 form a helical membrane-spanning segment; the sequence is VIAMVLELGIIVHSVVIGLSL. At 214–224 the chain is on the extracellular side; sequence GATSDTCTIKG. The helical transmembrane segment at 225-245 threads the bilayer; the sequence is LIAALCFHQMFEGMGLGGCIL. The Cytoplasmic segment spans residues 246-254; the sequence is QAEYTNMKK. The chain crosses the membrane as a helical span at residues 255–275; it reads FVMAFFFAVTTPFGIALGIAL. Residues 276 to 286 are Extracellular-facing; the sequence is STVYQDNSPKA. Residues 287 to 307 form a helical membrane-spanning segment; that stretch reads LITVGLLNACSAGLLIYMALV. At 308 to 326 the chain is on the cytoplasmic side; the sequence is DLLAAEFMGPKLQGSIKMQ. A helical transmembrane segment spans residues 327–347; that stretch reads FKCLIAALLGCGGMSIIAKWA.

It belongs to the ZIP transporter (TC 2.A.5) family. In terms of assembly, interacts with FREE1. Monoubiquitinated on several Lys residues. Monoubiquitination controls trafficking from the plasma membrane and targeting to the vacuole. Expressed in the external cell layers of the root including the lateral branching zone. Also detected in flowers before pollination.

It localises to the cell membrane. The protein localises to the early endosome. It is found in the golgi apparatus. The protein resides in the trans-Golgi network. Its subcellular location is the vacuole. High-affinity iron transporter that plays a key role in the uptake of iron from the rhizosphere across the plasma membrane in the root epidermal layer. Acts as the principal regulator of iron homeostasis in planta. Also mediates the heavy metals uptake under iron-deficiency by its ability to transport cobalt, cadmium, manganese and/or zinc ions. This Arabidopsis thaliana (Mouse-ear cress) protein is Fe(2+) transport protein 1 (IRT1).